The following is a 301-amino-acid chain: Sulfate adenylyltransferase subunit 2 (301 aa).

Residues 279–301 (RQGRLIDHDQDGSMEKKKQEGYF) are disordered.

The protein belongs to the PAPS reductase family. CysD subfamily. As to quaternary structure, heterodimer composed of CysD, the smaller subunit, and CysN.

It catalyses the reaction sulfate + ATP + H(+) = adenosine 5'-phosphosulfate + diphosphate. The protein operates within sulfur metabolism; hydrogen sulfide biosynthesis; sulfite from sulfate: step 1/3. Its function is as follows. With CysN forms the ATP sulfurylase (ATPS) that catalyzes the adenylation of sulfate producing adenosine 5'-phosphosulfate (APS) and diphosphate, the first enzymatic step in sulfur assimilation pathway. APS synthesis involves the formation of a high-energy phosphoric-sulfuric acid anhydride bond driven by GTP hydrolysis by CysN coupled to ATP hydrolysis by CysD. The polypeptide is Sulfate adenylyltransferase subunit 2 (Geotalea uraniireducens (strain Rf4) (Geobacter uraniireducens)).